We begin with the raw amino-acid sequence, 337 residues long: Putative 2-aminoethylphosphonate-binding periplasmic protein (337 aa).

Positions 1-21 are cleaved as a signal peptide; sequence MKLSRLALLSVFALASAPSWA.

This sequence belongs to the bacterial solute-binding protein 1 family.

The protein localises to the periplasm. In terms of biological role, probably part of the PhnSTUV complex (TC 3.A.1.11.5) involved in 2-aminoethylphosphonate import. This chain is Putative 2-aminoethylphosphonate-binding periplasmic protein (phnS), found in Salmonella paratyphi A (strain ATCC 9150 / SARB42).